The primary structure comprises 233 residues: Ion-translocating oxidoreductase complex subunit E (233 aa).

The next 5 membrane-spanning stretches (helical) occupy residues 22-42 (LLGLCPLLAVTSTATNALGLG), 69-89 (IPIYVMIIAAVVSCVQMLINA), 93-113 (GLYQSLGIFIPLIVTNCIVVG), 128-148 (ALDGMAIGLGATSVMVVLGSI), and 182-202 (PMLLAMLPPGAFIGLGMLLAA).

Belongs to the NqrDE/RnfAE family. The complex is composed of six subunits: RnfA, RnfB, RnfC, RnfD, RnfE and RnfG.

The protein resides in the cell inner membrane. Functionally, part of a membrane-bound complex that couples electron transfer with translocation of ions across the membrane. The sequence is that of Ion-translocating oxidoreductase complex subunit E from Erwinia tasmaniensis (strain DSM 17950 / CFBP 7177 / CIP 109463 / NCPPB 4357 / Et1/99).